Consider the following 102-residue polypeptide: Hemoglobin subunit beta-Z (102 aa).

Residues 1–102 (FGNLSSAQAI…VANALSHKYH (102 aa)) form the Globin domain. H19 and H48 together coordinate heme b.

Belongs to the globin family. As to quaternary structure, heterotetramer of two alpha chains and two beta chains.

This is an embryonic beta chain. This Mesocricetus auratus (Golden hamster) protein is Hemoglobin subunit beta-Z (HBBZ).